The chain runs to 101 residues: CRISPR-associated endoribonuclease Cas2 (101 aa).

Asp8 contributes to the Mg(2+) binding site.

The protein belongs to the CRISPR-associated endoribonuclease Cas2 protein family. As to quaternary structure, homodimer, forms a heterotetramer with a Cas1 homodimer. Mg(2+) serves as cofactor.

Its function is as follows. CRISPR (clustered regularly interspaced short palindromic repeat), is an adaptive immune system that provides protection against mobile genetic elements (viruses, transposable elements and conjugative plasmids). CRISPR clusters contain sequences complementary to antecedent mobile elements and target invading nucleic acids. CRISPR clusters are transcribed and processed into CRISPR RNA (crRNA). Functions as a ssRNA-specific endoribonuclease. Involved in the integration of spacer DNA into the CRISPR cassette. The chain is CRISPR-associated endoribonuclease Cas2 from Treponema denticola (strain ATCC 35405 / DSM 14222 / CIP 103919 / JCM 8153 / KCTC 15104).